The primary structure comprises 316 residues: MANLKEIRDRIKSVKNTRKITEAMRLVAAAKVRRAQEQVLRSRPFADRLARLLENLQARMRFEDADAPLLEDRPLETVTLMAVTGDRGLCGGYNANIIKRTEQRFEELQSKGYKVNLVLIGRKAISYFTNRSYPIQATFTGLEQVPTADEAGSVANEVFAEFLSETTDRVEIIFTKFINLVSCKPVVQTLLPLDPQGIADADDEIFRLTTKDGDLRVETGSAPANAQPELSSEIVFEQSPDQLLNALLPLYLQNQVLRSLQEAAASELASRMTAMNNASDNAKALAKTLTLDYNKARQAAITQEILEVAGGAAAVG.

This sequence belongs to the ATPase gamma chain family. F-type ATPases have 2 components, CF(1) - the catalytic core - and CF(0) - the membrane proton channel. CF(1) has five subunits: alpha(3), beta(3), gamma(1), delta(1), epsilon(1). CF(0) has three main subunits: a, b and c.

The protein localises to the cellular thylakoid membrane. Functionally, produces ATP from ADP in the presence of a proton gradient across the membrane. The gamma chain is believed to be important in regulating ATPase activity and the flow of protons through the CF(0) complex. This is ATP synthase gamma chain from Synechococcus sp. (strain WH7803).